The sequence spans 375 residues: 23S rRNA (uracil(747)-C(5))-methyltransferase RlmC (375 aa).

[4Fe-4S] cluster is bound by residues cysteine 3, cysteine 11, cysteine 14, and cysteine 87. The S-adenosyl-L-methionine site is built by glutamine 212, phenylalanine 241, glutamate 262, and asparagine 307. Cysteine 334 (nucleophile) is an active-site residue.

This sequence belongs to the class I-like SAM-binding methyltransferase superfamily. RNA M5U methyltransferase family. RlmC subfamily.

The enzyme catalyses uridine(747) in 23S rRNA + S-adenosyl-L-methionine = 5-methyluridine(747) in 23S rRNA + S-adenosyl-L-homocysteine + H(+). Catalyzes the formation of 5-methyl-uridine at position 747 (m5U747) in 23S rRNA. In Salmonella enteritidis PT4 (strain P125109), this protein is 23S rRNA (uracil(747)-C(5))-methyltransferase RlmC.